Consider the following 556-residue polypeptide: Formate--tetrahydrofolate ligase (556 aa).

ATP is bound at residue 65–72 (TPAGEGKT).

It belongs to the formate--tetrahydrofolate ligase family.

The catalysed reaction is (6S)-5,6,7,8-tetrahydrofolate + formate + ATP = (6R)-10-formyltetrahydrofolate + ADP + phosphate. It participates in one-carbon metabolism; tetrahydrofolate interconversion. The chain is Formate--tetrahydrofolate ligase from Peptoclostridium acidaminophilum (Eubacterium acidaminophilum).